The primary structure comprises 146 residues: Hut operon positive regulatory protein (146 aa).

This sequence belongs to the HutP family. As to quaternary structure, homohexamer.

Antiterminator that binds to cis-acting regulatory sequences on the mRNA in the presence of histidine, thereby suppressing transcription termination and activating the hut operon for histidine utilization. The sequence is that of Hut operon positive regulatory protein from Bacillus cytotoxicus (strain DSM 22905 / CIP 110041 / 391-98 / NVH 391-98).